A 658-amino-acid polypeptide reads, in one-letter code: Threonine--tRNA ligase (658 aa).

The 64-residue stretch at Met1–Thr64 folds into the TGS domain. Residues Asp246–Pro549 are catalytic. Zn(2+)-binding residues include Cys343, His394, and His526.

The protein belongs to the class-II aminoacyl-tRNA synthetase family. Homodimer. It depends on Zn(2+) as a cofactor.

The protein resides in the cytoplasm. The catalysed reaction is tRNA(Thr) + L-threonine + ATP = L-threonyl-tRNA(Thr) + AMP + diphosphate + H(+). Functionally, catalyzes the attachment of threonine to tRNA(Thr) in a two-step reaction: L-threonine is first activated by ATP to form Thr-AMP and then transferred to the acceptor end of tRNA(Thr). Also edits incorrectly charged L-seryl-tRNA(Thr). This is Threonine--tRNA ligase from Bartonella quintana (strain Toulouse) (Rochalimaea quintana).